The chain runs to 453 residues: Bifunctional protein GlmU (453 aa).

A pyrophosphorylase region spans residues Met-1 to Arg-228. UDP-N-acetyl-alpha-D-glucosamine is bound by residues Lys-23, Gln-73, Gly-78 to Thr-79, Ser-100 to Asp-102, Gly-139, Glu-153, Asn-168, and Asn-226. A Mg(2+)-binding site is contributed by Asp-102. Asn-226 is a binding site for Mg(2+). A linker region spans residues Ala-229–Glu-249. Positions Gly-250 to Lys-453 are N-acetyltransferase. UDP-N-acetyl-alpha-D-glucosamine contacts are provided by Arg-331 and Lys-349. His-361 acts as the Proton acceptor in catalysis. 2 residues coordinate UDP-N-acetyl-alpha-D-glucosamine: Tyr-364 and Asn-375. Acetyl-CoA contacts are provided by residues Ala-378, Asn-384–Tyr-385, Ser-403, Ala-421, and Arg-438.

The protein in the N-terminal section; belongs to the N-acetylglucosamine-1-phosphate uridyltransferase family. It in the C-terminal section; belongs to the transferase hexapeptide repeat family. In terms of assembly, homotrimer. Requires Mg(2+) as cofactor.

It is found in the cytoplasm. It carries out the reaction alpha-D-glucosamine 1-phosphate + acetyl-CoA = N-acetyl-alpha-D-glucosamine 1-phosphate + CoA + H(+). The enzyme catalyses N-acetyl-alpha-D-glucosamine 1-phosphate + UTP + H(+) = UDP-N-acetyl-alpha-D-glucosamine + diphosphate. The protein operates within nucleotide-sugar biosynthesis; UDP-N-acetyl-alpha-D-glucosamine biosynthesis; N-acetyl-alpha-D-glucosamine 1-phosphate from alpha-D-glucosamine 6-phosphate (route II): step 2/2. It participates in nucleotide-sugar biosynthesis; UDP-N-acetyl-alpha-D-glucosamine biosynthesis; UDP-N-acetyl-alpha-D-glucosamine from N-acetyl-alpha-D-glucosamine 1-phosphate: step 1/1. It functions in the pathway bacterial outer membrane biogenesis; LPS lipid A biosynthesis. In terms of biological role, catalyzes the last two sequential reactions in the de novo biosynthetic pathway for UDP-N-acetylglucosamine (UDP-GlcNAc). The C-terminal domain catalyzes the transfer of acetyl group from acetyl coenzyme A to glucosamine-1-phosphate (GlcN-1-P) to produce N-acetylglucosamine-1-phosphate (GlcNAc-1-P), which is converted into UDP-GlcNAc by the transfer of uridine 5-monophosphate (from uridine 5-triphosphate), a reaction catalyzed by the N-terminal domain. The protein is Bifunctional protein GlmU of Desulfitobacterium hafniense (strain Y51).